The chain runs to 102 residues: Urease subunit beta (102 aa).

Belongs to the urease beta subunit family. In terms of assembly, heterotrimer of UreA (gamma), UreB (beta) and UreC (alpha) subunits. Three heterotrimers associate to form the active enzyme.

The protein localises to the cytoplasm. The enzyme catalyses urea + 2 H2O + H(+) = hydrogencarbonate + 2 NH4(+). It participates in nitrogen metabolism; urea degradation; CO(2) and NH(3) from urea (urease route): step 1/1. The sequence is that of Urease subunit beta from Pseudomonas savastanoi pv. phaseolicola (strain 1448A / Race 6) (Pseudomonas syringae pv. phaseolicola (strain 1448A / Race 6)).